We begin with the raw amino-acid sequence, 428 residues long: Histidine--tRNA ligase (428 aa).

It belongs to the class-II aminoacyl-tRNA synthetase family. As to quaternary structure, homodimer.

The protein localises to the cytoplasm. The enzyme catalyses tRNA(His) + L-histidine + ATP = L-histidyl-tRNA(His) + AMP + diphosphate + H(+). This is Histidine--tRNA ligase from Lactobacillus gasseri (strain ATCC 33323 / DSM 20243 / BCRC 14619 / CIP 102991 / JCM 1131 / KCTC 3163 / NCIMB 11718 / NCTC 13722 / AM63).